A 193-amino-acid chain; its full sequence is Large ribosomal subunit protein bL17m (193 aa).

This sequence belongs to the bacterial ribosomal protein bL17 family. As to quaternary structure, component of the mitochondrial large ribosomal subunit (mt-LSU). Mature N.crassa 74S mitochondrial ribosomes consist of a small (37S) and a large (54S) subunit. The 37S small subunit contains a 16S ribosomal RNA (16S mt-rRNA) and 32 different proteins. The 54S large subunit contains a 23S rRNA (23S mt-rRNA) and 42 different proteins.

The protein resides in the mitochondrion. Functionally, component of the mitochondrial ribosome (mitoribosome), a dedicated translation machinery responsible for the synthesis of mitochondrial genome-encoded proteins, including at least some of the essential transmembrane subunits of the mitochondrial respiratory chain. The mitoribosomes are attached to the mitochondrial inner membrane and translation products are cotranslationally integrated into the membrane. This Neurospora crassa (strain ATCC 24698 / 74-OR23-1A / CBS 708.71 / DSM 1257 / FGSC 987) protein is Large ribosomal subunit protein bL17m (mrpl8).